We begin with the raw amino-acid sequence, 610 residues long: Pentatricopeptide repeat-containing protein At3g15590, mitochondrial (610 aa).

Residues 1 to 71 constitute a mitochondrion transit peptide; it reads MYSLSRILQR…FSRFFGIHKL (71 aa). Residues 88-142 are disordered; sequence EELSESEEAVPVSGDVPEGVVDDDSLFEPELGSDNDDLEIEEKHSKDGGKPTKKR. Positions 107–127 are enriched in acidic residues; that stretch reads VVDDDSLFEPELGSDNDDLEI. The segment covering 128–137 has biased composition (basic and acidic residues); it reads EEKHSKDGGK. PPR repeat units lie at residues 241–275, 276–309, 310–344, 345–379, 380–410, 412–442, 447–481, 482–517, and 518–552; these read GEVVYRTLLANCVLKHHVNKAEDIFNKMKELKFPT, SVFACNQLLLLYSMHDRKKISDVLLLMERENIKP, SRATYHFLINSKGLAGDITGMEKIVETIKEEGIEL, DPELQSILAKYYIRAGLKERAQDLMKEIEGKGLQQ, TPWVCRSLLPLYADIGDSDNVRRLSRFVDQN, RYDNCISAIKAWGKLKEVEEAEAVFERLVEK, PMMPYFALMEIYTENKMLAKGRDLVKRMGNAGIAI, GPSTWHALVKLYIKAGEVGKAELILNRATKDNKMRP, and MFTTYMAILEEYAKRGDVHNTEKVFMKMKRASYAA.

It belongs to the PPR family. P subfamily.

The protein localises to the mitochondrion. The protein is Pentatricopeptide repeat-containing protein At3g15590, mitochondrial of Arabidopsis thaliana (Mouse-ear cress).